The chain runs to 767 residues: DNA topoisomerase 1 (767 aa).

Positions 1–23 (MSGDHLHNDSQIEADFRLNDSHK) are enriched in basic and acidic residues. The disordered stretch occupies residues 1–201 (MSGDHLHNDS…NKKKKPKKEE (201 aa)). Ser-2 is modified (N-acetylserine). Phosphoserine occurs at positions 2 and 10. Residues 24-39 (HKDKHKDREHRHKEHK) show a composition bias toward basic residues. Residues 40–110 (KDKDKDREKS…DAKIKKEKEN (71 aa)) show a composition bias toward basic and acidic residues. Phosphoserine is present on Ser-59. Lys-103 is covalently cross-linked (Glycyl lysine isopeptide (Lys-Gly) (interchain with G-Cter in SUMO2)). Lys-105 participates in a covalent cross-link: Glycyl lysine isopeptide (Lys-Gly) (interchain with G-Cter in SUMO); alternate. Lys-105 participates in a covalent cross-link: Glycyl lysine isopeptide (Lys-Gly) (interchain with G-Cter in SUMO2); alternate. Residue Ser-114 is modified to Phosphoserine. Residue Lys-119 forms a Glycyl lysine isopeptide (Lys-Gly) (interchain with G-Cter in SUMO); alternate linkage. Residue Lys-119 forms a Glycyl lysine isopeptide (Lys-Gly) (interchain with G-Cter in SUMO2); alternate linkage. A Glycyl lysine isopeptide (Lys-Gly) (interchain with G-Cter in SUMO1); alternate cross-link involves residue Lys-119. Positions 131–168 (PKEDIKPLKRLRDEDDADYKPKKIKTEDIKKEKKRKSE) are enriched in basic and acidic residues. Glycyl lysine isopeptide (Lys-Gly) (interchain with G-Cter in SUMO2) cross-links involve residues Lys-136 and Lys-150. Residue Lys-155 forms a Glycyl lysine isopeptide (Lys-Gly) (interchain with G-Cter in SUMO); alternate linkage. Lys-155 participates in a covalent cross-link: Glycyl lysine isopeptide (Lys-Gly) (interchain with G-Cter in SUMO2); alternate. Residues Lys-160 and Lys-166 each participate in a glycyl lysine isopeptide (Lys-Gly) (interchain with G-Cter in SUMO2) cross-link. A Glycyl lysine isopeptide (Lys-Gly) (interchain with G-Cter in SUMO2); alternate cross-link involves residue Lys-174. Lys-174 bears the N6-acetyllysine; alternate mark. The segment covering 181–201 (KDKDKKVAEPDNKKKKPKKEE) has biased composition (basic and acidic residues). Residue Lys-206 forms a Glycyl lysine isopeptide (Lys-Gly) (interchain with G-Cter in SUMO2) linkage. Residue Lys-282 is modified to N6-acetyllysine. Residue Lys-338 forms a Glycyl lysine isopeptide (Lys-Gly) (interchain with G-Cter in SUMO2) linkage. 2 interaction with DNA regions span residues 427–428 (KY) and 490–495 (RAGNEK). Residues 434–767 (SSRIKGEKDW…IDMTDEDYEF (334 aa)) enclose the Topo IB-type catalytic domain. A Phosphoserine; by CK2 modification is found at Ser-508. Lys-551 is covalently cross-linked (Glycyl lysine isopeptide (Lys-Gly) (interchain with G-Cter in SUMO2)). An interaction with DNA region spans residues 587 to 589 (TAK). Residues Lys-644, Lys-702, and Lys-714 each participate in a glycyl lysine isopeptide (Lys-Gly) (interchain with G-Cter in SUMO2) cross-link. Residue Tyr-725 is the O-(3'-phospho-DNA)-tyrosine intermediate of the active site.

It belongs to the type IB topoisomerase family. In terms of assembly, monomer. Interacts with ERCC6. Interacts with TPRN; TPRN interacts with a number of DNA damage response proteins, is recruited to sites of DNA damage and may play a role in DNA damage repair. In terms of processing, sumoylated. Lys-119 is the main site of sumoylation. Sumoylation plays a role in partitioning TOP1 between nucleoli and nucleoplasm. Levels are dramatically increased on camptothecin (CPT) treatment. Phosphorylation at Ser-508 by CK2 increases binding to supercoiled DNA and sensitivity to camptothecin.

The protein localises to the nucleus. It is found in the nucleolus. The protein resides in the nucleoplasm. It carries out the reaction ATP-independent breakage of single-stranded DNA, followed by passage and rejoining.. Functionally, releases the supercoiling and torsional tension of DNA introduced during the DNA replication and transcription by transiently cleaving and rejoining one strand of the DNA duplex. Introduces a single-strand break via transesterification at a target site in duplex DNA. The scissile phosphodiester is attacked by the catalytic tyrosine of the enzyme, resulting in the formation of a DNA-(3'-phosphotyrosyl)-enzyme intermediate and the expulsion of a 5'-OH DNA strand. The free DNA strand then rotates around the intact phosphodiester bond on the opposing strand, thus removing DNA supercoils. Finally, in the religation step, the DNA 5'-OH attacks the covalent intermediate to expel the active-site tyrosine and restore the DNA phosphodiester backbone. Regulates the alternative splicing of tissue factor (F3) pre-mRNA in endothelial cells. Involved in the circadian transcription of the core circadian clock component BMAL1 by altering the chromatin structure around the ROR response elements (ROREs) on the BMAL1 promoter. The chain is DNA topoisomerase 1 (Top1) from Mus musculus (Mouse).